Here is a 129-residue protein sequence, read N- to C-terminus: Small ribosomal subunit protein uS13m (129 aa).

A disordered region spans residues 92–129; sequence HQDGSPLRGQRTHTNARTARKQIRKGNERRLPKEQATD. Residues 116 to 129 are compositionally biased toward basic and acidic residues; the sequence is KGNERRLPKEQATD.

It belongs to the universal ribosomal protein uS13 family. Part of the small ribosomal subunit.

Its subcellular location is the mitochondrion. In terms of biological role, located at the top of the head of the small subunit, it contacts several helices of the 18S rRNA. This chain is Small ribosomal subunit protein uS13m (RPS13), found in Zea mays (Maize).